A 581-amino-acid polypeptide reads, in one-letter code: NADH-quinone oxidoreductase subunit C/D (581 aa).

The segment at 1-172 (MSAVELVNEL…PPFVMTAARF (172 aa)) is NADH dehydrogenase I subunit C. The segment at 196–581 (ELMILNYGPH…IDYVMSDVDR (386 aa)) is NADH dehydrogenase I subunit D.

The protein in the N-terminal section; belongs to the complex I 30 kDa subunit family. This sequence in the C-terminal section; belongs to the complex I 49 kDa subunit family. As to quaternary structure, NDH-1 is composed of 13 different subunits. Subunits NuoB, CD, E, F, and G constitute the peripheral sector of the complex.

The protein localises to the cell inner membrane. The enzyme catalyses a quinone + NADH + 5 H(+)(in) = a quinol + NAD(+) + 4 H(+)(out). In terms of biological role, NDH-1 shuttles electrons from NADH, via FMN and iron-sulfur (Fe-S) centers, to quinones in the respiratory chain. The immediate electron acceptor for the enzyme in this species is believed to be ubiquinone. Couples the redox reaction to proton translocation (for every two electrons transferred, four hydrogen ions are translocated across the cytoplasmic membrane), and thus conserves the redox energy in a proton gradient. This is NADH-quinone oxidoreductase subunit C/D from Rhodopseudomonas palustris (strain BisB18).